The primary structure comprises 311 residues: Olfactory receptor 6B1 (311 aa).

Over 1–25 (MELENQTRVTKFILVGFPGSLSMRA) the chain is Extracellular. Asn5 carries an N-linked (GlcNAc...) asparagine glycan. Residues 26-46 (AMFLIFLVAYILTVAENVIII) form a helical membrane-spanning segment. Topologically, residues 47–54 (LLVLQNRP) are cytoplasmic. A helical transmembrane segment spans residues 55 to 75 (LHKPMYFFLANLSFLETWYIS). The Extracellular segment spans residues 76–99 (VTVPKLLFSFWSVNNSISFTLCMI). Residues Cys97 and Cys189 are joined by a disulfide bond. Residues 100 to 120 (QLYFFIALMCTECVLLAAMAY) traverse the membrane as a helical segment. The Cytoplasmic portion of the chain corresponds to 121 to 139 (DRYVAICRPLHYPTIMSHG). A helical membrane pass occupies residues 140–160 (LCFRLALGSWAIGFGISLAKI). Residues 161–196 (YFISCLSFCGPNVINHFFCDISPVLNLSCTDMSITE) are Extracellular-facing. The chain crosses the membrane as a helical span at residues 197-217 (LVDFILALVIFLFPLFITVLS). At 218–235 (YGCILATILCMPTGKQKA) the chain is on the cytoplasmic side. A helical membrane pass occupies residues 236–256 (FSTCASHLVVVTIFYSAIIFM). At 257–269 (YARPRVIHAFNMN) the chain is on the extracellular side. A helical membrane pass occupies residues 270–290 (KIISIFYAIVTPSLNPFIYCL). Residues 291-311 (RNREVKEALKKLAYCQASRSD) lie on the Cytoplasmic side of the membrane.

The protein belongs to the G-protein coupled receptor 1 family.

It localises to the cell membrane. In terms of biological role, odorant receptor. The sequence is that of Olfactory receptor 6B1 (OR6B1) from Homo sapiens (Human).